The sequence spans 365 residues: Succinate--CoA ligase [ADP-forming] subunit beta (365 aa).

The ATP-grasp domain occupies 9–230 (KEIFRAEGIS…EMEEYEPEEF (222 aa)). ATP contacts are provided by residues Lys45, 52–54 (GRG), Glu90, Ile93, and Glu98. 2 residues coordinate Mg(2+): Asn190 and Asp203. Residues Asn244 and 300-302 (GIT) each bind substrate.

It belongs to the succinate/malate CoA ligase beta subunit family. As to quaternary structure, heterotetramer of two alpha and two beta subunits. It depends on Mg(2+) as a cofactor.

It carries out the reaction succinate + ATP + CoA = succinyl-CoA + ADP + phosphate. The enzyme catalyses GTP + succinate + CoA = succinyl-CoA + GDP + phosphate. It functions in the pathway carbohydrate metabolism; tricarboxylic acid cycle; succinate from succinyl-CoA (ligase route): step 1/1. In terms of biological role, succinyl-CoA synthetase functions in the citric acid cycle (TCA), coupling the hydrolysis of succinyl-CoA to the synthesis of either ATP or GTP and thus represents the only step of substrate-level phosphorylation in the TCA. The beta subunit provides nucleotide specificity of the enzyme and binds the substrate succinate, while the binding sites for coenzyme A and phosphate are found in the alpha subunit. This chain is Succinate--CoA ligase [ADP-forming] subunit beta, found in Methanothermobacter thermautotrophicus (strain ATCC 29096 / DSM 1053 / JCM 10044 / NBRC 100330 / Delta H) (Methanobacterium thermoautotrophicum).